The primary structure comprises 344 residues: Nuclear distribution protein nudE-like 1-B (344 aa).

A coiled-coil region spans residues 13–190 (KEEIVYWREL…LAVRERQTDG (178 aa)). 2 disordered regions span residues 186–209 (RQTDGIRKSAPSSPTLDCEKTDSS) and 325–344 (PPGVLGSRPPSPPGLLPLSV). Residues 333-344 (PPSPPGLLPLSV) are compositionally biased toward pro residues.

This sequence belongs to the nudE family. Post-translationally, phosphorylated in mitosis.

Its subcellular location is the cytoplasm. It localises to the cytoskeleton. It is found in the microtubule organizing center. The protein localises to the centrosome. The protein resides in the spindle. Its function is as follows. Required for organization of the cellular microtubule array and microtubule anchoring at the centrosome. Positively regulates the activity of the minus-end directed microtubule motor protein dynein. May enhance dynein-mediated microtubule sliding by targeting dynein to the microtubule plus end. Positively regulates lysosome peripheral distribution and ruffled border formation in osteoclasts. This chain is Nuclear distribution protein nudE-like 1-B (ndel1-b), found in Xenopus laevis (African clawed frog).